Consider the following 279-residue polypeptide: Thymidylate synthase (279 aa).

Arg-21 serves as a coordination point for dUMP. Residue His-51 coordinates (6R)-5,10-methylene-5,6,7,8-tetrahydrofolate. 126 to 127 (RR) lines the dUMP pocket. Residue Cys-159 is the Nucleophile of the active site. Residues 179-182 (RSAD), Asn-190, and 220-222 (HLY) each bind dUMP. Asp-182 contacts (6R)-5,10-methylene-5,6,7,8-tetrahydrofolate. Ala-278 is a binding site for (6R)-5,10-methylene-5,6,7,8-tetrahydrofolate.

It belongs to the thymidylate synthase family. Bacterial-type ThyA subfamily. In terms of assembly, homodimer.

The protein resides in the cytoplasm. It catalyses the reaction dUMP + (6R)-5,10-methylene-5,6,7,8-tetrahydrofolate = 7,8-dihydrofolate + dTMP. It functions in the pathway pyrimidine metabolism; dTTP biosynthesis. Functionally, catalyzes the reductive methylation of 2'-deoxyuridine-5'-monophosphate (dUMP) to 2'-deoxythymidine-5'-monophosphate (dTMP) while utilizing 5,10-methylenetetrahydrofolate (mTHF) as the methyl donor and reductant in the reaction, yielding dihydrofolate (DHF) as a by-product. This enzymatic reaction provides an intracellular de novo source of dTMP, an essential precursor for DNA biosynthesis. The protein is Thymidylate synthase of Marinobacter nauticus (strain ATCC 700491 / DSM 11845 / VT8) (Marinobacter aquaeolei).